Here is a 112-residue protein sequence, read N- to C-terminus: cAMP-regulated phosphoprotein 19 (112 aa).

The residue at position 1 (M1) is an N-acetylmethionine. The span at 1–11 (MSAEVPEAASA) shows a compositional bias: low complexity. The tract at residues 1 to 49 (MSAEVPEAASAEEQKEMEDKVTSPEKAEEAKLKARYPHLGQKPGGSDFL) is disordered. At S2 the chain carries N-acetylserine. S2 and S23 each carry phosphoserine. Positions 12 to 32 (EEQKEMEDKVTSPEKAEEAKL) are enriched in basic and acidic residues. Phosphoserine; by GWL is present on residues S62 and S104. The interval 73 to 112 (KNKQLPTAAPDKTEVTGDHIPTPQDLPQRKPSLVASKLAG) is disordered. S104 is subject to Phosphoserine; by PKA. K109 is modified (N6-acetyllysine).

Belongs to the endosulfine family. In terms of assembly, interacts (when phosphorylated at Ser-62) with PPP2R2D. Interacts with SNCA. Interacts with PPP2R2A; the interaction is direct and this interaction inhibits PP2A activity. Phosphorylation at Ser-62 by MASTL/GWL during mitosis is essential for interaction with PPP2R2D (PR55-delta) and subsequent inactivation of PP2A. Phosphorylated by PKA.

The protein resides in the cytoplasm. In terms of biological role, protein phosphatase inhibitor that specifically inhibits protein phosphatase 2A (PP2A) during mitosis. Inhibition of PP2A is enhanced when ARPP19 is phosphorylated. When phosphorylated at Ser-62 during mitosis, specifically interacts with PPP2R2D (PR55-delta) and inhibits its activity, leading to inactivation of PP2A, an essential condition to keep cyclin-B1-CDK1 activity high during M phase. May indirectly enhance GAP-43 expression. This Homo sapiens (Human) protein is cAMP-regulated phosphoprotein 19 (ARPP19).